The chain runs to 105 residues: Small ribosomal subunit protein uS10c (105 aa).

This sequence belongs to the universal ribosomal protein uS10 family. As to quaternary structure, part of the 30S ribosomal subunit.

The protein localises to the plastid. Its subcellular location is the chloroplast. Involved in the binding of tRNA to the ribosomes. The protein is Small ribosomal subunit protein uS10c of Porphyra purpurea (Red seaweed).